The chain runs to 391 residues: tRNA-specific 2-thiouridylase MnmA (391 aa).

ATP contacts are provided by residues Gly35–Ser42 and Leu61. Catalysis depends on Cys122, which acts as the Nucleophile. A disulfide bond links Cys122 and Cys221. Gly147 is a binding site for ATP. Positions Lys171–Gln173 are interaction with tRNA. The active-site Cysteine persulfide intermediate is Cys221. Positions Arg328–Tyr329 are interaction with tRNA.

Belongs to the MnmA/TRMU family.

It localises to the cytoplasm. The catalysed reaction is S-sulfanyl-L-cysteinyl-[protein] + uridine(34) in tRNA + AH2 + ATP = 2-thiouridine(34) in tRNA + L-cysteinyl-[protein] + A + AMP + diphosphate + H(+). Catalyzes the 2-thiolation of uridine at the wobble position (U34) of tRNA, leading to the formation of s(2)U34. This Synechococcus sp. (strain CC9311) protein is tRNA-specific 2-thiouridylase MnmA.